A 408-amino-acid polypeptide reads, in one-letter code: Putative mannan endo-1,4-beta-mannosidase 4 (408 aa).

The signal sequence occupies residues 1–23 (MKCLCFIVLLAIVIAQSYVGVEA). Asn-73 is a glycosylation site (N-linked (GlcNAc...) asparagine). Substrate-binding residues include Trp-85 and Asn-201. Catalysis depends on Glu-202, which acts as the Proton donor. The active-site Nucleophile is Glu-322. A substrate-binding site is contributed by Trp-364.

Belongs to the glycosyl hydrolase 5 (cellulase A) family.

It is found in the secreted. It carries out the reaction Random hydrolysis of (1-&gt;4)-beta-D-mannosidic linkages in mannans, galactomannans and glucomannans.. The chain is Putative mannan endo-1,4-beta-mannosidase 4 (MAN4) from Arabidopsis thaliana (Mouse-ear cress).